Consider the following 387-residue polypeptide: Succinate--CoA ligase [ADP-forming] subunit beta (387 aa).

The region spanning 9 to 244 (KQLFASYGLP…VSQEDDRENR (236 aa)) is the ATP-grasp domain. Residues Lys46, 53-55 (GRG), Glu99, Cys102, and Glu107 contribute to the ATP site. Asn199 and Asp213 together coordinate Mg(2+). Residues Asn264 and 321-323 (GIV) contribute to the substrate site.

It belongs to the succinate/malate CoA ligase beta subunit family. In terms of assembly, heterotetramer of two alpha and two beta subunits. Mg(2+) serves as cofactor.

The catalysed reaction is succinate + ATP + CoA = succinyl-CoA + ADP + phosphate. The enzyme catalyses GTP + succinate + CoA = succinyl-CoA + GDP + phosphate. The protein operates within carbohydrate metabolism; tricarboxylic acid cycle; succinate from succinyl-CoA (ligase route): step 1/1. Functionally, succinyl-CoA synthetase functions in the citric acid cycle (TCA), coupling the hydrolysis of succinyl-CoA to the synthesis of either ATP or GTP and thus represents the only step of substrate-level phosphorylation in the TCA. The beta subunit provides nucleotide specificity of the enzyme and binds the substrate succinate, while the binding sites for coenzyme A and phosphate are found in the alpha subunit. In Legionella pneumophila (strain Corby), this protein is Succinate--CoA ligase [ADP-forming] subunit beta.